A 245-amino-acid chain; its full sequence is Zinc finger protein AZF1 (245 aa).

A compositionally biased stretch (polar residues) spans 1 to 15 (MALETLNSPTATTTA). Disordered stretches follow at residues 1 to 57 (MALE…NKNL) and 112 to 141 (LGGH…SHSN). A C2H2-type 1 zinc finger spans residues 97–119 (YKCTVCGKSFSSYQALGGHKTSH). Residues 123-134 (TNTSITSGNQEL) show a composition bias toward polar residues. The segment at 164–186 (HTCSICFKSFASGQALGGHKRCH) adopts a C2H2-type 2 zinc-finger fold. Residues 193-231 (GNGNGSSSNSVELVAGSDVSDVDNERWSEESAIGGHRGF) are disordered.

As to expression, highly expressed in roots and at lower levels in leaves and stems.

Its subcellular location is the nucleus. Transcriptional repressor involved in the inhibition of plant growth under abiotic stress conditions. Can repress the expression of various genes, including osmotic stress and abscisic acid-repressive genes and auxin-inducible genes, by binding to their promoter regions in a DNA sequence-specific manner. This is Zinc finger protein AZF1 (AZF1) from Arabidopsis thaliana (Mouse-ear cress).